Consider the following 1372-residue polypeptide: DNA-directed RNA polymerase subunit beta (1372 aa).

This sequence belongs to the RNA polymerase beta chain family. In terms of assembly, the RNAP catalytic core consists of 2 alpha, 1 beta, 1 beta' and 1 omega subunit. When a sigma factor is associated with the core the holoenzyme is formed, which can initiate transcription.

It catalyses the reaction RNA(n) + a ribonucleoside 5'-triphosphate = RNA(n+1) + diphosphate. In terms of biological role, DNA-dependent RNA polymerase catalyzes the transcription of DNA into RNA using the four ribonucleoside triphosphates as substrates. This is DNA-directed RNA polymerase subunit beta from Nitratidesulfovibrio vulgaris (strain ATCC 29579 / DSM 644 / CCUG 34227 / NCIMB 8303 / VKM B-1760 / Hildenborough) (Desulfovibrio vulgaris).